The chain runs to 264 residues: Glutamate racemase (264 aa).

Substrate is bound by residues 9–10 (DS) and 41–42 (YG). The Proton donor/acceptor role is filled by Cys-72. Position 73–74 (73–74 (NT)) interacts with substrate. The active-site Proton donor/acceptor is Cys-183. Position 184–185 (184–185 (TH)) interacts with substrate.

The protein belongs to the aspartate/glutamate racemases family.

The enzyme catalyses L-glutamate = D-glutamate. It participates in cell wall biogenesis; peptidoglycan biosynthesis. Its function is as follows. Provides the (R)-glutamate required for cell wall biosynthesis. This Geobacillus sp. (strain WCH70) protein is Glutamate racemase.